The following is a 351-amino-acid chain: sn-glycerol-3-phosphate import ATP-binding protein UgpC (351 aa).

One can recognise an ABC transporter domain in the interval 4 to 234; sequence ITLKDLVKSY…PATLFVAGFI (231 aa). An ATP-binding site is contributed by 36-43; that stretch reads GPSGCGKS.

The protein belongs to the ABC transporter superfamily. sn-glycerol-3-phosphate importer (TC 3.A.1.1.3) family. In terms of assembly, the complex is composed of two ATP-binding proteins (UgpC), two transmembrane proteins (UgpA and UgpE) and a solute-binding protein (UgpB).

Its subcellular location is the cell inner membrane. It catalyses the reaction sn-glycerol 3-phosphate(out) + ATP + H2O = sn-glycerol 3-phosphate(in) + ADP + phosphate + H(+). Functionally, part of the ABC transporter complex UgpBAEC involved in sn-glycerol-3-phosphate (G3P) import. Responsible for energy coupling to the transport system. The protein is sn-glycerol-3-phosphate import ATP-binding protein UgpC of Ruegeria sp. (strain TM1040) (Silicibacter sp.).